The sequence spans 134 residues: Profilin-3 (134 aa).

Cys13 and Cys118 are joined by a disulfide. Positions 84 to 100 (AVIRGKKGSGGITIKKT) match the Involved in PIP2 interaction motif. Thr114 is modified (phosphothreonine).

This sequence belongs to the profilin family. Occurs in many kinds of cells as a complex with monomeric actin in a 1:1 ratio. In terms of processing, phosphorylated by MAP kinases.

It localises to the cytoplasm. It is found in the cytoskeleton. Its function is as follows. Binds to actin and affects the structure of the cytoskeleton. At high concentrations, profilin prevents the polymerization of actin, whereas it enhances it at low concentrations. This chain is Profilin-3, found in Olea europaea (Common olive).